We begin with the raw amino-acid sequence, 349 residues long: Protein Wnt-7a (349 aa).

Positions 1–31 (MNRKARRCLGHLFLSLGMVYLRIGGFSSVVA) are cleaved as a signal peptide. 5 disulfide bridges follow: cysteine 73/cysteine 84, cysteine 123/cysteine 131, cysteine 133/cysteine 152, cysteine 200/cysteine 214, and cysteine 202/cysteine 209. N-linked (GlcNAc...) asparagine glycosylation is found at asparagine 83 and asparagine 127. The O-palmitoleoyl serine; by PORCN moiety is linked to residue serine 206. The tract at residues 238-266 (VEPVRASRNKRPTFLKIKKPLSYRKPMDT) is disordered linker. Intrachain disulfides connect cysteine 278-cysteine 309, cysteine 294-cysteine 304, cysteine 308-cysteine 348, cysteine 324-cysteine 339, cysteine 326-cysteine 336, and cysteine 331-cysteine 332. A glycan (N-linked (GlcNAc...) asparagine) is linked at asparagine 295.

The protein belongs to the Wnt family. In terms of assembly, forms a soluble 1:1 complex with AFM; this prevents oligomerization and is required for prolonged biological activity. The complex with AFM may represent the physiological form in body fluids. Interacts with PORCN. Interacts (via intrinsically disordered linker region) with RECK; interaction with RECK confers ligand selectivity for Wnt7 in brain endothelial cells and allows these cells to selectively respond to Wnt7. Interacts with FZD5. Palmitoleoylation is required for efficient binding to frizzled receptors. Depalmitoleoylation leads to Wnt signaling pathway inhibition.

The protein localises to the secreted. It localises to the extracellular space. Its subcellular location is the extracellular matrix. Ligand for members of the frizzled family of seven transmembrane receptors that functions in the canonical Wnt/beta-catenin signaling pathway. Plays an important role in embryonic development, including dorsal versus ventral patterning during limb development, skeleton development and urogenital tract development. Required for central nervous system (CNS) angiogenesis and blood-brain barrier regulation. Required for normal, sexually dimorphic development of the Mullerian ducts, and for normal fertility in both sexes. Required for normal neural stem cell proliferation in the hippocampus dentate gyrus. Required for normal progress through the cell cycle in neural progenitor cells, for self-renewal of neural stem cells, and for normal neuronal differentiation and maturation. Promotes formation of synapses via its interaction with FZD5. This Pongo pygmaeus (Bornean orangutan) protein is Protein Wnt-7a (WNT7A).